Here is a 1630-residue protein sequence, read N- to C-terminus: Merozoite surface protein 1 (1630 aa).

Positions 1-19 are cleaved as a signal peptide; the sequence is MKIIFFLCSFLFFIINTQC. The tract at residues 60-113 is disordered; it reads TKGASAQSGTSGTSGTSGPSGPSGTSPSSRSNTLPRSNTSSGASPPADASDSDA. A tripeptide SG(TP) repeat region spans residues 67–84; it reads SGTSGTSGTSGPSGPSGT. Positions 67–88 are enriched in low complexity; sequence SGTSGTSGTSGPSGPSGTSPSS. Residues 89 to 98 are compositionally biased toward polar residues; the sequence is RSNTLPRSNT. N-linked (GlcNAc...) asparagine glycosylation occurs at asparagine 97. Over residues 99-108 the composition is skewed to low complexity; sequence SSGASPPADA. N-linked (GlcNAc...) asparagine glycosylation occurs at asparagine 259. The tract at residues 680-755 is disordered; the sequence is KKNIKTEGQS…VPTPPAPVNN (76 aa). Composition is skewed to polar residues over residues 685 to 695 and 702 to 713; these read TEGQSDNSEPS and GQATTKPGQQAG. Over residues 721–732 the composition is skewed to low complexity; the sequence is VQAQAQEQKQAQ. N-linked (GlcNAc...) asparagine glycosylation is found at asparagine 755, asparagine 759, asparagine 774, and asparagine 835. The disordered stretch occupies residues 884–906; that stretch reads SMQPLSLTPQDKPEVSANDDTSH. Asparagine 911, asparagine 955, asparagine 1049, asparagine 1156, and asparagine 1165 each carry an N-linked (GlcNAc...) asparagine glycan. Residues 993-1107 form a required for binding to host erythrocyte cell membrane region; that stretch reads QLSFDLYNKY…EESIQTEDNY (115 aa). Residues 1190–1203 are compositionally biased toward polar residues; sequence VSESGSDTLEQSQP. The interval 1190–1220 is disordered; sequence VSESGSDTLEQSQPKKPASTHVGAESNTITT. 2 N-linked (GlcNAc...) asparagine glycosylation sites follow: asparagine 1436 and asparagine 1517. 2 consecutive EGF-like domains span residues 1521–1561 and 1562–1610; these read HQCV…VENP and NPTC…FCSS. Disulfide bonds link cysteine 1523-cysteine 1534, cysteine 1528-cysteine 1544, cysteine 1546-cysteine 1557, cysteine 1565-cysteine 1578, cysteine 1572-cysteine 1592, and cysteine 1594-cysteine 1608. Serine 1609 carries the GPI-anchor amidated serine lipid modification. A propeptide spans 1610–1630 (removed in mature form); the sequence is SSNFLGISFLLILMLILYSFI.

In terms of assembly, forms a complex composed of subunits p83, p30, p38, and p42 which remain non-covalently associated; the complex is formed at the merozoite surface prior to egress from host erythrocytes. Forms a complex composed of processed MSP1 subunits, MSP6 subunit p36 and MSP7; the complex is formed at the merozoite surface prior to egress from host erythrocytes. Within the complex, interacts (via subunit p38) with MSP6 subunit p36 and (via subunits p83, p30 and p38) with MSP7 (via subunit p22). Forms a complex composed of MSP1, MSP6, DBLMSP1 and DBLMSP2. Within the complex, interacts (via subunit p38) with DBLMSP1 and DBLMSP2. Forms a complex composed of MSP1, and rhoptry proteins RhopH3, RAP1 and CLAG9/RhopH3. Within the complex, interacts (via subunits p42 and p19) with RhopH3 (via C-terminus). Forms a complex composed of MSP1, MSP6, MSP7, MSP9 and MSP3; within the complex, MSP6 and MSP9 mediate the binding to the host erythrocyte. Interacts (via subunits p19 and p42) with MSP9; the interaction is direct; MSP1 subunits p19 or p42, and MSP9 form a co-ligand complex that interacts with host SLC4A1/Band 3 protein. May interact with PFD6. Interacts with host spectrin. As to quaternary structure, interacts with host glycophorin GYPA in a sialic acid-independent manner. Interacts with host proinflammatory cytokine S100P; the interaction blocks S100P inflammatory and chemotactic activities. In terms of assembly, interacts with host SLC4A1/Band 3 (via 5ABC region) on the host erythrocyte surface in a sialic acid-independent manner. Post-translationally, the p190 precursor is cleaved by SUB1 prior to merozoite egress into 4 subunits p83, p30, p38, and p42 which remain non-covalently associated. SUB1-mediated proteolytic cleavage occurs in an orderly manner; the first cleavage occurs at the p83/p30 site, followed by cleavage at the p30/p38 site, the last cleavage occurs at the p38/p42 site. The order of cleavage is essential for parasite viability. SUB1-mediated processing is essential for merozoite egress. In a second processing step during erythrocyte invasion, p42 is cleaved by SUB2 into p33 and p19; the latter remains attached to the merozoite surface via its GPI-anchor and stays on the surface during the subsequent ring stage.

Its subcellular location is the cell membrane. The protein localises to the secreted. It is found in the vacuole membrane. Its function is as follows. During the asexual blood stage, involved in merozoite egress from host erythrocytes possibly via its interaction with the host cytoskeleton protein spectrin resulting in the destabilization of the host cytoskeleton and thus leading to erythrocyte cell membrane rupture. Involved in the binding to host erythrocytes and is required for host erythrocyte invasion. Functionally, by binding to host proinflammatory cytokine S100P may interfere with host immune responses. Involved in merozoite invasion of host erythrocytes. May play a role in the biogenesis and/or function of the food vacuole during the intraerythrocytic development. This chain is Merozoite surface protein 1, found in Plasmodium falciparum (isolate K1 / Thailand).